A 725-amino-acid polypeptide reads, in one-letter code: Ribonucleoside-diphosphate reductase subunit alpha (725 aa).

Substrate-binding positions include Thr-172, 188-189 (SC), Gly-217, 397-401 (NLCSE), and 599-603 (PTGSI). Cys-189 and Cys-426 are oxidised to a cystine. The active-site Proton acceptor is the Asn-397. Cys-399 (cysteine radical intermediate) is an active-site residue. Catalysis depends on Glu-401, which acts as the Proton acceptor.

It belongs to the ribonucleoside diphosphate reductase large chain family. In terms of assembly, tetramer of two alpha and two beta subunits. Co-immunoprecipitates with DarG in the presence and absence of darT.

It catalyses the reaction a 2'-deoxyribonucleoside 5'-diphosphate + [thioredoxin]-disulfide + H2O = a ribonucleoside 5'-diphosphate + [thioredoxin]-dithiol. Its activity is regulated as follows. Under complex allosteric control mediated by deoxynucleoside triphosphates and ATP binding. The type of nucleotide bound at the specificity site determines substrate preference. It seems probable that ATP makes the enzyme reduce CDP and UDP, dGTP favors ADP reduction and dTTP favors GDP reduction. CDP reduction is stimulated by dATP. Provides the precursors necessary for DNA synthesis. Catalyzes the biosynthesis of deoxyribonucleotides from the corresponding ribonucleotides. When coexpressed in E.coli with nrdF2 the 2 proteins complement a temperature-sensitive E.coli mutant, however coexpression with nrdF1 does not complement. In Mycobacterium tuberculosis (strain ATCC 25618 / H37Rv), this protein is Ribonucleoside-diphosphate reductase subunit alpha (nrdE).